A 507-amino-acid polypeptide reads, in one-letter code: Dihydrolipoyl dehydrogenase 1, mitochondrial (507 aa).

The N-terminal 36 residues, M1 to F36, are a transit peptide targeting the mitochondrion. Residues E73–C82, K91, G155, and T184–S186 contribute to the FAD site. C82 and C87 are disulfide-bonded. Residues G221–E228, E244, V278, and G313 each bind NAD(+). FAD is bound by residues D354 and M360–H363. Residue H486 is the Proton acceptor of the active site.

It belongs to the class-I pyridine nucleotide-disulfide oxidoreductase family. In terms of assembly, homodimer. Part of both the glycine cleavage system composed of four proteins: P, T, L and H and of the pyruvate dehydrogenase complex containing multiple copies of three enzymatic components: pyruvate dehydrogenase (E1), dihydrolipoamide acetyltransferase (E2) and lipoamide dehydrogenase (E3). The cofactor is FAD. S-nytrosylated at unknown positions. Preferentially expressed in leaves, flowers and siliques and at a lower level in roots and stems.

The protein resides in the mitochondrion matrix. The enzyme catalyses N(6)-[(R)-dihydrolipoyl]-L-lysyl-[protein] + NAD(+) = N(6)-[(R)-lipoyl]-L-lysyl-[protein] + NADH + H(+). Functionally, lipoamide dehydrogenase is a component of the glycine decarboxylase (GDC) or glycine cleavage system as well as of the alpha-ketoacid dehydrogenase complexes. LPD1 is probably the protein most often associated with the glycine decarboxylase complex while LPD2 is probably incorporated into alpha-ketoacid dehydrogenase complexes. The chain is Dihydrolipoyl dehydrogenase 1, mitochondrial (LPD1) from Arabidopsis thaliana (Mouse-ear cress).